Consider the following 79-residue polypeptide: Hematopoietic cell signal transducer (79 aa).

The N-terminal stretch at 1 to 17 (MDPPGYLLFLLLLPVAA) is a signal peptide. Topologically, residues 18–35 (SQTSAGSCSGCGTLSLPL) are extracellular. Residues 36–56 (LAGLVAADAVMSLLIVGVVFV) traverse the membrane as a helical segment. Over 57–79 (CMRPHGRPAQEDGRVYINMPGRG) the chain is Cytoplasmic. Position 72 is a phosphotyrosine (tyrosine 72). Positions 72–74 (YIN) are GRB2 binding site. The PIK3R1 binding site stretch occupies residues 72 to 75 (YINM).

Belongs to the DAP10 family. Homodimer; Disulfide-linked. Interacts with KLRK1 to form a stable complex, which results in surface expression of both proteins, whereas alone, it is minimally expressed. Interacts with PIK3R1 and GRB2. Interacts with CLEC5A. Forms an CLEC5A/TYROBP/HCST trimolecular complex depending almost solely on TYROBP. Heterohexamer composed of four subunits of HCST/DAP10 and two subunits of KLRK1. Interacts (via transmembrane domain) with KLRK1 isoform 1 (via transmembrane domain); the interaction is required for KLRK1 cell surface expression on naive NK cells and activated CD8(+) T-cells, but is dispensable on activated TYROBP-expressing NK cells. Interacts (via transmembrane domain) with KLRK1 isoform 2 (via transmembrane domain); the interaction is required for KLRK1 NK cell surface expression and induces NK cell-mediated cytotoxicity. Interacts with CD300H. In terms of processing, phosphorylated; PIK3R1 and GRB2 associate specifically with tyrosine-phosphorylated HCST. Post-translationally, O-glycosylated.

It is found in the membrane. Its function is as follows. Transmembrane adapter protein which associates with KLRK1 to form an activation receptor KLRK1-HCST in lymphoid and myeloid cells; this receptor plays a major role in triggering cytotoxicity against target cells expressing cell surface ligands such as MHC class I chain-related MICA and MICB, and UL16-binding proteins (ULBPs); these ligands are up-regulated by stress conditions and pathological state such as viral infection and tumor transformation. Functions as a docking site for PI3-kinase PIK3R1 and GRB2. Interaction of ULBPs with KLRK1-HCST triggers calcium mobilization and activation of the PIK3R1, MAP2K/ERK, and JAK2/STAT5 signaling pathways. Both PIK3R1 and GRB2 are required for full KLRK1-HCST-mediated activation and ultimate killing of target cells. In NK cells, KLRK1-HCST signaling directly induces cytotoxicity and enhances cytokine production initiated via DAP12/TYROBP-associated receptors. In T-cells, it provides primarily costimulation for TCR-induced signals. KLRK1-HCST receptor plays a role in immune surveillance against tumors and is required for cytolysis of tumors cells; indeed, melanoma cells that do not express KLRK1 ligands escape from immune surveillance mediated by NK cells. This Mus musculus (Mouse) protein is Hematopoietic cell signal transducer (Hcst).